A 281-amino-acid polypeptide reads, in one-letter code: MGRENILKYQLEHDHESDLVTEKDQSLLLDNNNNLNGMNNTIKTHPVRVSSGNHNNFPFTLSSESTLQDFLNNNKFFVDSIKHNHGNQIFDLNGQGQSPHTLWIGCSDSRAGDQCLATLPGEIFVHRNIANIVNANDISSQGVIQFAIDVLKVKKIIVCGHTDCGGIWASLSKKKIGGVLDLWLNPVRHIRAANLKLLEEYNQDPKLKAKKLAELNVISSVTALKRHPSASVALKKNEIEVWGMLYDVATGYLSQVEIPQDEFEDLFHVHDEHDEEEYNPH.

Zn(2+) is bound by residues Cys-106, His-161, and Cys-164.

Belongs to the beta-class carbonic anhydrase family. Zn(2+) serves as cofactor.

Its subcellular location is the cytoplasm. The protein resides in the nucleus. The protein localises to the mitochondrion intermembrane space. The enzyme catalyses hydrogencarbonate + H(+) = CO2 + H2O. Amines and amino acids act as activators of catalytic activity, whereas natural product-based phenols, dithiocarbamates, aliphatic and aromatic carboxylates, boronic acids, and sulfonamides act as inhibitors of enzymatic activity. Also inhibited by anions such as cyanide and carbonate, and to a lesser extent by sulfate, phenylboronic, and phenyl arsonic acid. In terms of biological role, catalyzes the reversible hydration of CO(2) to H(2)CO(3). The main role may be to provide inorganic carbon for the bicarbonate-dependent carboxylation reactions catalyzed by pyruvate carboxylase, acetyl-CoA carboxylase and carbamoyl-phosphate synthetase. Involved in protection against oxidative damage. Acts as a CO(2) chemosensor and induces CO(2)-mediated filamentation. Essential for pathological growth in niches where sufficient CO(2) is not supplied by the host. Necessary for white-to-opaque switching at low CO(2) concentrations. This is Carbonic anhydrase (NCE103) from Candida albicans (strain SC5314 / ATCC MYA-2876) (Yeast).